We begin with the raw amino-acid sequence, 316 residues long: Methionyl-tRNA formyltransferase (316 aa).

Residue 114-117 (SLLP) participates in (6S)-5,6,7,8-tetrahydrofolate binding.

Belongs to the Fmt family.

The catalysed reaction is L-methionyl-tRNA(fMet) + (6R)-10-formyltetrahydrofolate = N-formyl-L-methionyl-tRNA(fMet) + (6S)-5,6,7,8-tetrahydrofolate + H(+). Functionally, attaches a formyl group to the free amino group of methionyl-tRNA(fMet). The formyl group appears to play a dual role in the initiator identity of N-formylmethionyl-tRNA by promoting its recognition by IF2 and preventing the misappropriation of this tRNA by the elongation apparatus. This Aromatoleum aromaticum (strain DSM 19018 / LMG 30748 / EbN1) (Azoarcus sp. (strain EbN1)) protein is Methionyl-tRNA formyltransferase.